A 558-amino-acid polypeptide reads, in one-letter code: Membrane protein insertase YidC (558 aa).

The next 5 helical transmembrane spans lie at I3–W23, F364–F384, L438–V458, P477–P497, and M508–L528.

It belongs to the OXA1/ALB3/YidC family. Type 1 subfamily. As to quaternary structure, interacts with the Sec translocase complex via SecD. Specifically interacts with transmembrane segments of nascent integral membrane proteins during membrane integration.

Its subcellular location is the cell inner membrane. Its function is as follows. Required for the insertion and/or proper folding and/or complex formation of integral membrane proteins into the membrane. Involved in integration of membrane proteins that insert both dependently and independently of the Sec translocase complex, as well as at least some lipoproteins. Aids folding of multispanning membrane proteins. The chain is Membrane protein insertase YidC from Burkholderia pseudomallei (strain K96243).